Reading from the N-terminus, the 825-residue chain is Zinc finger protein 229 (825 aa).

The disordered stretch occupies residues 1-26 (METLTSRHEKRALHSQASAISQDREE). The KRAB domain occupies 34–108 (LSFKDVAVVF…SHKELSSCKI (75 aa)). Residues 291–315 (KLCQYDEFSEGLRHSAHLNRHQRVP) form a C2H2-type 1; degenerate zinc finger. 7 C2H2-type zinc fingers span residues 349-371 (YRCD…QGVH), 377-399 (YKCE…QRVH), 405-427 (YKCS…QRLH), 433-455 (YTCS…QHIH), 461-483 (YSCG…QKTH), 489-511 (YQCD…QRVH), and 517-539 (YKCN…QRLH). Lys543 is covalently cross-linked (Glycyl lysine isopeptide (Lys-Gly) (interchain with G-Cter in SUMO2)). 10 C2H2-type zinc fingers span residues 545–566 (YKCE…QRVH), 572–594 (YKCS…QRVH), 600–622 (YVCD…QRVH), 628–650 (YKCA…QRVH), 656–678 (YRCQ…QRVH), 684–706 (YTCD…QRLH), 712–734 (YTCC…KRVH), 740–762 (YRCH…QRVH), 768–790 (YKCE…QRVH), and 796–818 (YTCG…QRVH).

Belongs to the krueppel C2H2-type zinc-finger protein family.

It localises to the nucleus. Its function is as follows. May be involved in transcriptional regulation. In Homo sapiens (Human), this protein is Zinc finger protein 229.